Reading from the N-terminus, the 324-residue chain is Probable tRNA pseudouridine synthase B (324 aa).

Asp-72 acts as the Nucleophile in catalysis. Positions 239-314 constitute a PUA domain; sequence LPRVVILDSA…LVIETRKVFM (76 aa).

It belongs to the pseudouridine synthase TruB family. Type 2 subfamily.

It carries out the reaction uridine(55) in tRNA = pseudouridine(55) in tRNA. In terms of biological role, could be responsible for synthesis of pseudouridine from uracil-55 in the psi GC loop of transfer RNAs. The polypeptide is Probable tRNA pseudouridine synthase B (Methanothermobacter thermautotrophicus (strain ATCC 29096 / DSM 1053 / JCM 10044 / NBRC 100330 / Delta H) (Methanobacterium thermoautotrophicum)).